We begin with the raw amino-acid sequence, 317 residues long: uncharacterized protein (317 aa).

The next 7 membrane-spanning stretches (helical) occupy residues 24–44 (ISII…TGIM), 63–83 (LSIS…SILA), 136–156 (LGVA…ISED), 187–207 (LIPI…IGFF), 229–249 (ILAL…GGFL), 252–272 (GILS…LTFS), and 295–315 (IVMV…AGLL).

The protein to M.jannaschii MJ0880, MJ1556 and MJ1589.

Its subcellular location is the cell membrane. This is an uncharacterized protein from Methanocaldococcus jannaschii (strain ATCC 43067 / DSM 2661 / JAL-1 / JCM 10045 / NBRC 100440) (Methanococcus jannaschii).